The following is an 815-amino-acid chain: Lon protease 2 (815 aa).

The 194-residue stretch at Leu19–Ile212 folds into the Lon N-terminal domain. Gly365 to Thr372 is a binding site for ATP. Residues Arg601–Ser782 form the Lon proteolytic domain. Catalysis depends on residues Ser688 and Lys731.

The protein belongs to the peptidase S16 family. As to quaternary structure, homohexamer. Organized in a ring with a central cavity.

The protein resides in the cytoplasm. It carries out the reaction Hydrolysis of proteins in presence of ATP.. Its function is as follows. ATP-dependent serine protease that mediates the selective degradation of mutant and abnormal proteins as well as certain short-lived regulatory proteins. Required for cellular homeostasis and for survival from DNA damage and developmental changes induced by stress. Degrades polypeptides processively to yield small peptide fragments that are 5 to 10 amino acids long. Binds to DNA in a double-stranded, site-specific manner. The polypeptide is Lon protease 2 (Herpetosiphon aurantiacus (strain ATCC 23779 / DSM 785 / 114-95)).